Here is a 311-residue protein sequence, read N- to C-terminus: Porphobilinogen deaminase (311 aa).

Position 240 is an S-(dipyrrolylmethanemethyl)cysteine (C240).

It belongs to the HMBS family. As to quaternary structure, monomer. Dipyrromethane serves as cofactor.

The catalysed reaction is 4 porphobilinogen + H2O = hydroxymethylbilane + 4 NH4(+). Its pathway is porphyrin-containing compound metabolism; protoporphyrin-IX biosynthesis; coproporphyrinogen-III from 5-aminolevulinate: step 2/4. Functionally, tetrapolymerization of the monopyrrole PBG into the hydroxymethylbilane pre-uroporphyrinogen in several discrete steps. This is Porphobilinogen deaminase from Natranaerobius thermophilus (strain ATCC BAA-1301 / DSM 18059 / JW/NM-WN-LF).